The following is a 300-amino-acid chain: Probable ABC transporter permease protein YurM (300 aa).

The next 6 helical transmembrane spans lie at 37-57 (VWVF…WMVM), 98-118 (VIVT…AAYG), 129-149 (FFLV…LVPL), 161-181 (TYWA…IILI), 204-224 (FGVF…TSGI), and 264-284 (WGVL…LFLL). An ABC transmembrane type-1 domain is found at 94–285 (FMNSVIVTAL…APIIILFLLM (192 aa)).

It belongs to the binding-protein-dependent transport system permease family. MalFG subfamily.

The protein localises to the cell membrane. Probably part of the binding-protein-dependent transport system YurMNO. Probably responsible for the translocation of the substrate across the membrane. The sequence is that of Probable ABC transporter permease protein YurM (yurM) from Bacillus subtilis (strain 168).